We begin with the raw amino-acid sequence, 396 residues long: 1-deoxy-D-xylulose 5-phosphate reductoisomerase (396 aa).

Residues Thr13, Gly14, Ser15, Ile16, and Asn127 each contribute to the NADPH site. Lys128 contributes to the 1-deoxy-D-xylulose 5-phosphate binding site. Position 129 (Glu129) interacts with NADPH. Asp153 is a binding site for Mn(2+). Residues Ser154, Glu155, Ser184, and His207 each contribute to the 1-deoxy-D-xylulose 5-phosphate site. Glu155 contacts Mn(2+). Residue Gly213 coordinates NADPH. 4 residues coordinate 1-deoxy-D-xylulose 5-phosphate: Ser220, Asn225, Lys226, and Glu229. Glu229 provides a ligand contact to Mn(2+).

Belongs to the DXR family. The cofactor is Mg(2+). It depends on Mn(2+) as a cofactor.

It catalyses the reaction 2-C-methyl-D-erythritol 4-phosphate + NADP(+) = 1-deoxy-D-xylulose 5-phosphate + NADPH + H(+). It participates in isoprenoid biosynthesis; isopentenyl diphosphate biosynthesis via DXP pathway; isopentenyl diphosphate from 1-deoxy-D-xylulose 5-phosphate: step 1/6. Functionally, catalyzes the NADPH-dependent rearrangement and reduction of 1-deoxy-D-xylulose-5-phosphate (DXP) to 2-C-methyl-D-erythritol 4-phosphate (MEP). The polypeptide is 1-deoxy-D-xylulose 5-phosphate reductoisomerase (Pseudomonas fluorescens (strain Pf0-1)).